The sequence spans 263 residues: 5'-nucleotidase SurE (263 aa).

A divalent metal cation-binding residues include Asp-8, Asp-9, Ser-40, and Asn-93.

It belongs to the SurE nucleotidase family. The cofactor is a divalent metal cation.

Its subcellular location is the cytoplasm. The catalysed reaction is a ribonucleoside 5'-phosphate + H2O = a ribonucleoside + phosphate. Nucleotidase that shows phosphatase activity on nucleoside 5'-monophosphates. The protein is 5'-nucleotidase SurE of Caulobacter vibrioides (strain ATCC 19089 / CIP 103742 / CB 15) (Caulobacter crescentus).